The primary structure comprises 78 residues: MHQNSVTLDSAGAITRYFAKANLHTQQETLGEIVTEILKDGRNLSRKSLCAKLLCRLEHATGEEEQKHYNALIGLLFE.

Its function is as follows. Probably a connector protein for RcsB/C regulation of biofilm formation, providing additional signal input into the two-component signaling pathway. Partially antagonizes the activities of YmgA and AriR, proteins that, via the Rcs phosphorelay, promote the synthesis of colanic acid, an exopolysaccharide and matrix component. The chain is Probable two-component-system connector protein YcgZ (ycgZ) from Escherichia coli (strain K12).